We begin with the raw amino-acid sequence, 162 residues long: ATP synthase subunit b (162 aa).

A helical membrane pass occupies residues 16-36; that stretch reads GISGGTIIYQLLMFIILLALL.

This sequence belongs to the ATPase B chain family. In terms of assembly, F-type ATPases have 2 components, F(1) - the catalytic core - and F(0) - the membrane proton channel. F(1) has five subunits: alpha(3), beta(3), gamma(1), delta(1), epsilon(1). F(0) has three main subunits: a(1), b(2) and c(10-14). The alpha and beta chains form an alternating ring which encloses part of the gamma chain. F(1) is attached to F(0) by a central stalk formed by the gamma and epsilon chains, while a peripheral stalk is formed by the delta and b chains.

It localises to the cell membrane. Its function is as follows. F(1)F(0) ATP synthase produces ATP from ADP in the presence of a proton or sodium gradient. F-type ATPases consist of two structural domains, F(1) containing the extramembraneous catalytic core and F(0) containing the membrane proton channel, linked together by a central stalk and a peripheral stalk. During catalysis, ATP synthesis in the catalytic domain of F(1) is coupled via a rotary mechanism of the central stalk subunits to proton translocation. Functionally, component of the F(0) channel, it forms part of the peripheral stalk, linking F(1) to F(0). The sequence is that of ATP synthase subunit b from Bacillus caldotenax.